The primary structure comprises 197 residues: Imidazoleglycerol-phosphate dehydratase (197 aa).

It belongs to the imidazoleglycerol-phosphate dehydratase family.

The protein resides in the cytoplasm. It catalyses the reaction D-erythro-1-(imidazol-4-yl)glycerol 3-phosphate = 3-(imidazol-4-yl)-2-oxopropyl phosphate + H2O. Its pathway is amino-acid biosynthesis; L-histidine biosynthesis; L-histidine from 5-phospho-alpha-D-ribose 1-diphosphate: step 6/9. The protein is Imidazoleglycerol-phosphate dehydratase of Pseudomonas fluorescens (strain ATCC BAA-477 / NRRL B-23932 / Pf-5).